We begin with the raw amino-acid sequence, 200 residues long: Lipid A acyltransferase PagP (200 aa).

An N-terminal signal peptide occupies residues 1–24; the sequence is MRLKLTSHTCLFALSSLLVTPAFA. Catalysis depends on residues His72, Asp115, and Ser116.

The protein belongs to the lipid A palmitoyltransferase family. As to quaternary structure, homodimer.

It localises to the cell outer membrane. The enzyme catalyses a lipid A + a 1,2-diacyl-sn-glycero-3-phosphocholine = a hepta-acyl lipid A + a 2-acyl-sn-glycero-3-phosphocholine. The catalysed reaction is a lipid IVA + a 1,2-diacyl-sn-glycero-3-phosphocholine = a lipid IVB + a 2-acyl-sn-glycero-3-phosphocholine. It catalyses the reaction a lipid IIA + a 1,2-diacyl-sn-glycero-3-phosphocholine = a lipid IIB + a 2-acyl-sn-glycero-3-phosphocholine. In terms of biological role, transfers a fatty acid residue from the sn-1 position of a phospholipid to the N-linked hydroxyfatty acid chain on the proximal unit of lipid A or its precursors. This is Lipid A acyltransferase PagP from Dickeya dadantii (strain 3937) (Erwinia chrysanthemi (strain 3937)).